The chain runs to 151 residues: UPF0208 membrane protein YfbV (151 aa).

2 helical membrane-spanning segments follow: residues 46–65 (YAIR…QIAL) and 69–91 (LGPA…WWLG).

Belongs to the UPF0208 family.

The protein resides in the cell inner membrane. The polypeptide is UPF0208 membrane protein YfbV (Salmonella choleraesuis (strain SC-B67)).